Here is a 153-residue protein sequence, read N- to C-terminus: ATP synthase subunit b' (153 aa).

Residues 23 to 40 traverse the membrane as a helical segment; the sequence is LMAIQVVALTYILNSLFF.

This sequence belongs to the ATPase B chain family. In terms of assembly, F-type ATPases have 2 components, F(1) - the catalytic core - and F(0) - the membrane proton channel. F(1) has five subunits: alpha(3), beta(3), gamma(1), delta(1), epsilon(1). F(0) has four main subunits: a(1), b(1), b'(1) and c(10-14). The alpha and beta chains form an alternating ring which encloses part of the gamma chain. F(1) is attached to F(0) by a central stalk formed by the gamma and epsilon chains, while a peripheral stalk is formed by the delta, b and b' chains.

It localises to the cellular thylakoid membrane. Functionally, f(1)F(0) ATP synthase produces ATP from ADP in the presence of a proton or sodium gradient. F-type ATPases consist of two structural domains, F(1) containing the extramembraneous catalytic core and F(0) containing the membrane proton channel, linked together by a central stalk and a peripheral stalk. During catalysis, ATP synthesis in the catalytic domain of F(1) is coupled via a rotary mechanism of the central stalk subunits to proton translocation. In terms of biological role, component of the F(0) channel, it forms part of the peripheral stalk, linking F(1) to F(0). The b'-subunit is a diverged and duplicated form of b found in plants and photosynthetic bacteria. This chain is ATP synthase subunit b', found in Prochlorococcus marinus (strain AS9601).